Reading from the N-terminus, the 593-residue chain is Polyphenol oxidase, chloroplastic (593 aa).

A compositionally biased stretch (low complexity) spans 1–13 (MTSLSPPVVTTPT). Positions 1-34 (MTSLSPPVVTTPTVPNPATKPLSPFSQNNSQVSL) are disordered. Residues 1-89 (MTSLSPPVVT…GMGTDPFAFA (89 aa)) constitute a chloroplast transit peptide. Over residues 24–34 (PFSQNNSQVSL) the composition is skewed to polar residues. 2 disulfides stabilise this stretch: Cys100–Cys115 and Cys114–Cys176. The Cu cation site is built by His175, His196, His205, His327, His331, and His361. Residues 179–196 (CDGAYDQVGFPELELQIH) constitute a cross-link (2'-(S-cysteinyl)-histidine (Cys-His)).

It belongs to the tyrosinase family. The cofactor is Cu(2+).

It localises to the plastid. It is found in the chloroplast thylakoid lumen. The enzyme catalyses 2 catechol + O2 = 2 1,2-benzoquinone + 2 H2O. Functionally, catalyzes the oxidation of mono- and o-diphenols to o-diquinones. The sequence is that of Polyphenol oxidase, chloroplastic from Malus domestica (Apple).